The chain runs to 139 residues: Putative pre-16S rRNA nuclease (139 aa).

Belongs to the YqgF nuclease family.

It is found in the cytoplasm. Could be a nuclease involved in processing of the 5'-end of pre-16S rRNA. In Bacillus licheniformis (strain ATCC 14580 / DSM 13 / JCM 2505 / CCUG 7422 / NBRC 12200 / NCIMB 9375 / NCTC 10341 / NRRL NRS-1264 / Gibson 46), this protein is Putative pre-16S rRNA nuclease.